Here is a 459-residue protein sequence, read N- to C-terminus: Bifunctional protein GlmU (459 aa).

Residues 1–230 (MSNRFAVILA…FDETLGVNDR (230 aa)) form a pyrophosphorylase region. UDP-N-acetyl-alpha-D-glucosamine is bound by residues 9 to 12 (LAAG), Lys23, Gln73, and 78 to 79 (GT). Residue Asp103 coordinates Mg(2+). UDP-N-acetyl-alpha-D-glucosamine-binding residues include Gly140, Glu155, Asn170, and Asn228. Asn228 lines the Mg(2+) pocket. Residues 231–251 (VALSQAEVIMKNRINHKNMVN) form a linker region. Residues 252-459 (GVTIIDPSNT…VDQLLNKKKS (208 aa)) are N-acetyltransferase. Residues Arg333 and Lys351 each coordinate UDP-N-acetyl-alpha-D-glucosamine. The Proton acceptor role is filled by His363. The UDP-N-acetyl-alpha-D-glucosamine site is built by Tyr366 and Asn377. Acetyl-CoA contacts are provided by residues 386 to 387 (NY), Ala423, and Arg440.

It in the N-terminal section; belongs to the N-acetylglucosamine-1-phosphate uridyltransferase family. In the C-terminal section; belongs to the transferase hexapeptide repeat family. As to quaternary structure, homotrimer. Requires Mg(2+) as cofactor.

The protein resides in the cytoplasm. The catalysed reaction is alpha-D-glucosamine 1-phosphate + acetyl-CoA = N-acetyl-alpha-D-glucosamine 1-phosphate + CoA + H(+). It catalyses the reaction N-acetyl-alpha-D-glucosamine 1-phosphate + UTP + H(+) = UDP-N-acetyl-alpha-D-glucosamine + diphosphate. The protein operates within nucleotide-sugar biosynthesis; UDP-N-acetyl-alpha-D-glucosamine biosynthesis; N-acetyl-alpha-D-glucosamine 1-phosphate from alpha-D-glucosamine 6-phosphate (route II): step 2/2. It participates in nucleotide-sugar biosynthesis; UDP-N-acetyl-alpha-D-glucosamine biosynthesis; UDP-N-acetyl-alpha-D-glucosamine from N-acetyl-alpha-D-glucosamine 1-phosphate: step 1/1. It functions in the pathway bacterial outer membrane biogenesis; LPS lipid A biosynthesis. Its function is as follows. Catalyzes the last two sequential reactions in the de novo biosynthetic pathway for UDP-N-acetylglucosamine (UDP-GlcNAc). The C-terminal domain catalyzes the transfer of acetyl group from acetyl coenzyme A to glucosamine-1-phosphate (GlcN-1-P) to produce N-acetylglucosamine-1-phosphate (GlcNAc-1-P), which is converted into UDP-GlcNAc by the transfer of uridine 5-monophosphate (from uridine 5-triphosphate), a reaction catalyzed by the N-terminal domain. The protein is Bifunctional protein GlmU of Bacillus cytotoxicus (strain DSM 22905 / CIP 110041 / 391-98 / NVH 391-98).